The following is a 140-amino-acid chain: Large ribosomal subunit protein uL11 (140 aa).

This sequence belongs to the universal ribosomal protein uL11 family. Part of the ribosomal stalk of the 50S ribosomal subunit. Interacts with L10 and the large rRNA to form the base of the stalk. L10 forms an elongated spine to which L12 dimers bind in a sequential fashion forming a multimeric L10(L12)X complex. In terms of processing, one or more lysine residues are methylated.

Forms part of the ribosomal stalk which helps the ribosome interact with GTP-bound translation factors. The polypeptide is Large ribosomal subunit protein uL11 (Staphylococcus carnosus (strain TM300)).